We begin with the raw amino-acid sequence, 196 residues long: Interleukin-23 subunit alpha (196 aa).

Positions Met-1–Ala-21 are cleaved as a signal peptide.

The protein belongs to the IL-6 superfamily. Heterodimer with IL12B; disulfide-linked. The heterodimer is known as interleukin IL-23. Interacts with IL23R; this interaction enables recruitment of IL12RB1.

It is found in the secreted. Associates with IL12B to form the pro-inflammatory cytokine IL-23 that plays different roles in innate and adaptive immunity. Released by antigen-presenting cells such as dendritic cells or macrophages, binds to a heterodimeric receptor complex composed of IL12RB1 and IL23R to activate JAK2 and TYK2 which then phosphorylate the receptor to form a docking site leading to the phosphorylation of STAT3 and STAT4. This process leads to activation of several pathways including p38 MAPK or NF-kappa-B and promotes the production of pro-inflammatory cytokines such as interleukin-17A/IL17A. In turn, participates in the early and effective intracellular bacterial clearance. Promotes the expansion and survival of T-helper 17 cells, a CD4-positive helper T-cell subset that produces IL-17, as well as other IL-17-producing cells. The sequence is that of Interleukin-23 subunit alpha (Il23a) from Rattus norvegicus (Rat).